We begin with the raw amino-acid sequence, 124 residues long: V-type proton ATPase subunit F (124 aa).

The protein belongs to the V-ATPase F subunit family. V-ATPase is a heteromultimeric enzyme composed of a peripheral catalytic V1 complex (components A to H) attached to an integral membrane V0 proton pore complex (components: a, c, c', c'', d, e, f and VOA1).

The protein localises to the vacuole membrane. Functionally, subunit of the V1 complex of vacuolar(H+)-ATPase (V-ATPase), a multisubunit enzyme composed of a peripheral complex (V1) that hydrolyzes ATP and a membrane integral complex (V0) that translocates protons. V-ATPase is responsible for acidifying and maintaining the pH of intracellular compartments. The polypeptide is V-type proton ATPase subunit F (vma-7) (Neurospora crassa (strain ATCC 24698 / 74-OR23-1A / CBS 708.71 / DSM 1257 / FGSC 987)).